A 327-amino-acid polypeptide reads, in one-letter code: L-lactate dehydrogenase (327 aa).

Residues Val-18, Asp-39, Lys-44, Tyr-69, and Gly-83–Ala-84 contribute to the NAD(+) site. Substrate is bound by residues Gln-86, Arg-92, and Asn-124–Asp-127. NAD(+) contacts are provided by residues Ala-122–Asn-124 and Ser-147. Asp-152 to Arg-155 contributes to the substrate binding site. The beta-D-fructose 1,6-bisphosphate site is built by Arg-157 and His-172. The active-site Proton acceptor is His-179. Position 224 is a phosphotyrosine (Tyr-224). Thr-233 serves as a coordination point for substrate.

This sequence belongs to the LDH/MDH superfamily. LDH family. Homotetramer.

The protein resides in the cytoplasm. It catalyses the reaction (S)-lactate + NAD(+) = pyruvate + NADH + H(+). It participates in fermentation; pyruvate fermentation to lactate; (S)-lactate from pyruvate: step 1/1. Its activity is regulated as follows. Allosterically activated by fructose 1,6-bisphosphate (FBP). Functionally, catalyzes the conversion of lactate to pyruvate. In Streptococcus equi subsp. zooepidemicus (strain H70), this protein is L-lactate dehydrogenase.